A 209-amino-acid polypeptide reads, in one-letter code: Ribosomal RNA large subunit methyltransferase E (209 aa).

The S-adenosyl-L-methionine site is built by G63, W65, D83, D99, and D124. K164 acts as the Proton acceptor in catalysis.

Belongs to the class I-like SAM-binding methyltransferase superfamily. RNA methyltransferase RlmE family.

It is found in the cytoplasm. It catalyses the reaction uridine(2552) in 23S rRNA + S-adenosyl-L-methionine = 2'-O-methyluridine(2552) in 23S rRNA + S-adenosyl-L-homocysteine + H(+). Its function is as follows. Specifically methylates the uridine in position 2552 of 23S rRNA at the 2'-O position of the ribose in the fully assembled 50S ribosomal subunit. The protein is Ribosomal RNA large subunit methyltransferase E of Shewanella frigidimarina (strain NCIMB 400).